The primary structure comprises 24 residues: Pandinin-2 (24 aa).

As to quaternary structure, homooligomer. In terms of tissue distribution, expressed by the venom gland.

The protein resides in the secreted. Its subcellular location is the target cell membrane. Disrupts cell membranes through formation of pores. Has strong antimicrobial activity against Gram-positive bacteria B.subtilis, S.epidermidis, E.faecalis and S.aureus. Is less active against Gram-negative bacteria P.aeruginosa and E.coli. Also increases efficacy of antibiotics (ampicillin, chloramphenicol, streptomycin, kanamycin, novobiocin) when tested against E.coli, probably by facilitating their incorporation into the bacteria. Possesses antifungal activity against C.albicans and hemolytic activity against human, sheep and pig erythrocytes. In Pandinus imperator (Emperor scorpion), this protein is Pandinin-2.